The primary structure comprises 875 residues: DNA topoisomerase 3-beta (875 aa).

The Toprim domain occupies 3 to 153 (SVLMVAEKPS…QVTYRAHFSA (151 aa)). Residues 170–589 (NENEAKSVDA…AIKIFKLKFM (420 aa)) enclose the Topo IA-type catalytic domain. Tyrosine 332 acts as the O-(5'-phospho-DNA)-tyrosine intermediate in catalysis. Residues 371–391 (QTPRKGKDAGDHPPITPMKLG) form a disordered region.

This sequence belongs to the type IA topoisomerase family.

The enzyme catalyses ATP-independent breakage of single-stranded DNA, followed by passage and rejoining.. Functionally, releases the supercoiling and torsional tension of DNA introduced during the DNA replication and transcription by transiently cleaving and rejoining one strand of the DNA duplex. Introduces a single-strand break via transesterification at a target site in duplex DNA. The scissile phosphodiester is attacked by the catalytic tyrosine of the enzyme, resulting in the formation of a DNA-(5'-phosphotyrosyl)-enzyme intermediate and the expulsion of a 3'-OH DNA strand. The free DNA strand than undergoes passage around the unbroken strand thus removing DNA supercoils. Finally, in the religation step, the DNA 3'-OH attacks the covalent intermediate to expel the active-site tyrosine and restore the DNA phosphodiester backbone. Weakly relaxes negative supercoils and displays a distinct preference for binding single-stranded DNA. In Drosophila melanogaster (Fruit fly), this protein is DNA topoisomerase 3-beta (Top3beta).